The following is a 62-amino-acid chain: Venom peptide 6 (62 aa).

A signal peptide spans Met-1–Ala-26. 3 AXPX repeats span residues Ala-26 to Ser-29, Ala-30 to Asn-33, and Ala-40 to Asp-43. Positions Ala-27 to Ala-46 are excised as a propeptide.

Belongs to the MCD family. As to expression, expressed by the venom gland.

The protein localises to the secreted. It is found in the target cell membrane. In terms of biological role, antimicrobial peptide with strong activity against the fungus B.cinerea (MIC=5 uM) and the Gram-positive bacterium S.aureus (MIC=50 uM), and no activity against C.albicans (MIC&gt;200 uM), and the Gram-negative bacterium E.coli (MIC&gt;200 uM). Shows cytolytic activity against insect cell lines. Has no hemolytic activity against human erythrocytes. In vivo, peptide injection in the vicinity of the head and thorax of lepidopteran larvae induces feeding disorder that lasts one or two days before recovering. This Eumenes pomiformis (Potter wasp) protein is Venom peptide 6.